The primary structure comprises 117 residues: Large ribosomal subunit protein bL20 (117 aa).

The protein belongs to the bacterial ribosomal protein bL20 family.

Its function is as follows. Binds directly to 23S ribosomal RNA and is necessary for the in vitro assembly process of the 50S ribosomal subunit. It is not involved in the protein synthesizing functions of that subunit. The protein is Large ribosomal subunit protein bL20 of Maridesulfovibrio salexigens (strain ATCC 14822 / DSM 2638 / NCIMB 8403 / VKM B-1763) (Desulfovibrio salexigens).